The chain runs to 269 residues: Aminoglycoside N(3)-acetyltransferase III (269 aa).

It belongs to the antibiotic N-acetyltransferase family.

The catalysed reaction is a 2-deoxystreptamine antibiotic + acetyl-CoA = an N(3)-acetyl-2-deoxystreptamine antibiotic + CoA + H(+). Its function is as follows. Resistance to antibiotics containing the 2-deoxy-streptamine ring including gentamicin, kanamycin, tobramycin, neomycin and apramycin. This is Aminoglycoside N(3)-acetyltransferase III (aac3-Vb) from Serratia marcescens.